A 288-amino-acid polypeptide reads, in one-letter code: Polyamine aminopropyltransferase (288 aa).

A PABS domain is found at 9–238; it reads ETLHDQFGQY…GIMTFAWATD (230 aa). Gln-33 contributes to the S-methyl-5'-thioadenosine binding site. Residues His-64 and Asp-88 each contribute to the spermidine site. Residues Glu-108 and 140-141 each bind S-methyl-5'-thioadenosine; that span reads DG. The active-site Proton acceptor is Asp-158. 158-161 provides a ligand contact to spermidine; that stretch reads DCTD. Position 165 (Pro-165) interacts with S-methyl-5'-thioadenosine.

It belongs to the spermidine/spermine synthase family. As to quaternary structure, homodimer or homotetramer.

The protein resides in the cytoplasm. It catalyses the reaction S-adenosyl 3-(methylsulfanyl)propylamine + putrescine = S-methyl-5'-thioadenosine + spermidine + H(+). It participates in amine and polyamine biosynthesis; spermidine biosynthesis; spermidine from putrescine: step 1/1. In terms of biological role, catalyzes the irreversible transfer of a propylamine group from the amino donor S-adenosylmethioninamine (decarboxy-AdoMet) to putrescine (1,4-diaminobutane) to yield spermidine. This Shigella sonnei (strain Ss046) protein is Polyamine aminopropyltransferase.